The chain runs to 128 residues: Small ribosomal subunit protein eS6 (128 aa).

Belongs to the eukaryotic ribosomal protein eS6 family.

In Thermoplasma volcanium (strain ATCC 51530 / DSM 4299 / JCM 9571 / NBRC 15438 / GSS1), this protein is Small ribosomal subunit protein eS6.